The chain runs to 258 residues: Type III pantothenate kinase (258 aa).

6 to 13 (DVGNTNIV) lines the ATP pocket. Residues Y100 and 107–110 (GADR) contribute to the substrate site. D109 serves as the catalytic Proton acceptor. D129 is a K(+) binding site. T132 contacts ATP. T184 lines the substrate pocket.

The protein belongs to the type III pantothenate kinase family. In terms of assembly, homodimer. The cofactor is NH4(+). K(+) serves as cofactor.

The protein localises to the cytoplasm. It catalyses the reaction (R)-pantothenate + ATP = (R)-4'-phosphopantothenate + ADP + H(+). It functions in the pathway cofactor biosynthesis; coenzyme A biosynthesis; CoA from (R)-pantothenate: step 1/5. In terms of biological role, catalyzes the phosphorylation of pantothenate (Pan), the first step in CoA biosynthesis. This is Type III pantothenate kinase from Clostridium botulinum (strain Kyoto / Type A2).